The following is a 442-amino-acid chain: Cytokine receptor-like factor 3 (442 aa).

Positions 10-46 (EVLLQEARENVEAAQSYRRELGQRLQGLREAQRQIKE) form a coiled coil. The 94-residue stretch at 181–274 (PPVQIEELIE…PQTGHSTLVP (94 aa)) folds into the Fibronectin type-III domain.

Belongs to the cytokine receptor-like factor 3 family.

It localises to the cytoplasm. Its function is as follows. May play a role in the negative regulation of cell cycle progression. This chain is Cytokine receptor-like factor 3 (Crlf3), found in Mus musculus (Mouse).